The chain runs to 306 residues: MKIDIVSVFPEYFEVLNLSLLGKAQEKGLVEVTAHNLRDWTHDVHHSVDDTPVGGGAGMVMKPEVWSECLDELLHLEPTTVTCDSMVTCDSTADADDTASADAAEPAESATEIAANADTVPATDRPVLIFPNPSAPLFTQQDATELSHANHLLFGCGRYEGYDARIPQYYRAQGVDVREYSIGDYVLNGGEVAVSVMLEAITRLLPGFMGNAASIVEESYTGENALLEHRQYTKPADWRGIKVPDVLLSGDHAKVDRFRRDEALAKTNELRPDLIEALDCSKLDKADRKTLMALGWEVSGAHPRQR.

Residues G157 and 182-187 (IGDYVL) each bind S-adenosyl-L-methionine.

Belongs to the RNA methyltransferase TrmD family. As to quaternary structure, homodimer.

Its subcellular location is the cytoplasm. It catalyses the reaction guanosine(37) in tRNA + S-adenosyl-L-methionine = N(1)-methylguanosine(37) in tRNA + S-adenosyl-L-homocysteine + H(+). Its function is as follows. Specifically methylates guanosine-37 in various tRNAs. The sequence is that of tRNA (guanine-N(1)-)-methyltransferase from Bifidobacterium adolescentis (strain ATCC 15703 / DSM 20083 / NCTC 11814 / E194a).